A 185-amino-acid chain; its full sequence is Thymidine kinase (185 aa).

ATP-binding positions include 10–17 (GPMYSGKT) and 83–86 (DEVQ). Catalysis depends on E84, which acts as the Proton acceptor. The Zn(2+) site is built by C140, C143, C173, and C176.

The protein belongs to the thymidine kinase family. Homotetramer.

It is found in the cytoplasm. The catalysed reaction is thymidine + ATP = dTMP + ADP + H(+). The chain is Thymidine kinase from Pseudothermotoga lettingae (strain ATCC BAA-301 / DSM 14385 / NBRC 107922 / TMO) (Thermotoga lettingae).